The chain runs to 226 residues: Protein DEHYDRATION-INDUCED 19 (226 aa).

Positions 158–208 (FPTSDTEETSKPPISIPDDASVIKETPAQPWDSSIDSSLTREEREQKRKQA) are disordered. A compositionally biased stretch (basic and acidic residues) spans 196–205 (LTREEREQKR).

It belongs to the Di19 family.

In Oryza sativa subsp. japonica (Rice), this protein is Protein DEHYDRATION-INDUCED 19 (DI19-1).